Here is a 476-residue protein sequence, read N- to C-terminus: tRNA(Ile)-lysidine synthase (476 aa).

Position 30–35 (30–35) interacts with ATP; the sequence is SGGPDS.

It belongs to the tRNA(Ile)-lysidine synthase family.

The protein localises to the cytoplasm. The catalysed reaction is cytidine(34) in tRNA(Ile2) + L-lysine + ATP = lysidine(34) in tRNA(Ile2) + AMP + diphosphate + H(+). Functionally, ligates lysine onto the cytidine present at position 34 of the AUA codon-specific tRNA(Ile) that contains the anticodon CAU, in an ATP-dependent manner. Cytidine is converted to lysidine, thus changing the amino acid specificity of the tRNA from methionine to isoleucine. The sequence is that of tRNA(Ile)-lysidine synthase from Bacillus thuringiensis subsp. konkukian (strain 97-27).